Here is a 586-residue protein sequence, read N- to C-terminus: Alanine racemase ungC (586 aa).

Positions 187–206 (RVGALPAAASTASPMGSSLP) are disordered. Residues 196-206 (STASPMGSSLP) are compositionally biased toward polar residues.

Belongs to the trans-sulfuration enzymes family. Requires pyridoxal 5'-phosphate as cofactor.

The catalysed reaction is L-alanine = D-alanine. It participates in secondary metabolite biosynthesis. Its function is as follows. Alanine racemase; part of the gene cluster that mediates the biosynthesis of the unguisins, gamma-aminobutyric acid (GABA)-containing fungal cyclic heptapeptides with the amino acid sequence cyclo-(D-Ala1-D-Val2-L-Phe3-D-Val4-D-Ala5-D-Trp6-GABA7) for unguisin A and cyclo-(D-Ala1-D-Val2-L-Leu3-D-Val4-D-Ala5-D-Trp6-GABA7) for unguisin B. Within the pathway, the alanine racemase ungC catalyzes the interconversion of L-alanine and D-alanine, providing the D-alanine which is accepted by the first adenylation domain of the nonribosomal peptide synthetase (NRPS) ungA. UngA is the main enzyme within the cluster which condenses the 7 residues using its respective 7 modules. The terminal condensation domain (Ct) is involved in cyclization with D-alanine and thereby releasing of unguisins A and B. Finally, the hydrolase ungD catalyzes the hydrolysis between the D-tryptophan and GABA residues of unguisins A and B to produce the corresponding linear peptides. The sequence is that of Alanine racemase ungC from Aspergillus violaceofuscus (strain CBS 115571).